Reading from the N-terminus, the 1097-residue chain is DNA-directed RNA polymerase subunit beta (1097 aa).

Belongs to the RNA polymerase beta chain family. As to quaternary structure, in plastids the minimal PEP RNA polymerase catalytic core is composed of four subunits: alpha, beta, beta', and beta''. When a (nuclear-encoded) sigma factor is associated with the core the holoenzyme is formed, which can initiate transcription.

It is found in the plastid. The protein localises to the chloroplast. The enzyme catalyses RNA(n) + a ribonucleoside 5'-triphosphate = RNA(n+1) + diphosphate. In terms of biological role, DNA-dependent RNA polymerase catalyzes the transcription of DNA into RNA using the four ribonucleoside triphosphates as substrates. The chain is DNA-directed RNA polymerase subunit beta from Rhodomonas salina (Cryptomonas salina).